The primary structure comprises 249 residues: uncharacterized protein (249 aa).

The protein resides in the cytoplasm. Its subcellular location is the nucleus. The protein localises to the nucleolus. This is an uncharacterized protein from Schizosaccharomyces pombe (strain 972 / ATCC 24843) (Fission yeast).